Reading from the N-terminus, the 108-residue chain is Ig kappa chain V-V region MOPC 149 (108 aa).

A framework-1 region spans residues aspartate 1–cysteine 23. A disulfide bridge links cysteine 23 with cysteine 88. The tract at residues arginine 24–alanine 34 is complementarity-determining-1. The interval tryptophan 35 to tyrosine 49 is framework-2. The interval aspartate 50–glutamate 56 is complementarity-determining-2. The framework-3 stretch occupies residues glycine 57–cysteine 88. Positions glutamine 89 to threonine 97 are complementarity-determining-3. The framework-4 stretch occupies residues phenylalanine 98 to arginine 108.

The polypeptide is Ig kappa chain V-V region MOPC 149 (Mus musculus (Mouse)).